Reading from the N-terminus, the 276-residue chain is Dermonecrotic toxin LsaSicTox-alphaIB2i (276 aa).

The active site involves histidine 5. The Mg(2+) site is built by glutamate 25 and aspartate 27. Residue histidine 41 is the Nucleophile of the active site. Intrachain disulfides connect cysteine 45–cysteine 51 and cysteine 47–cysteine 190. A Mg(2+)-binding site is contributed by aspartate 85. N-linked (GlcNAc...) asparagine glycans are attached at residues asparagine 129 and asparagine 253.

The protein belongs to the arthropod phospholipase D family. Class II subfamily. Mg(2+) is required as a cofactor. In terms of tissue distribution, expressed by the venom gland.

The protein resides in the secreted. The enzyme catalyses an N-(acyl)-sphingosylphosphocholine = an N-(acyl)-sphingosyl-1,3-cyclic phosphate + choline. The catalysed reaction is an N-(acyl)-sphingosylphosphoethanolamine = an N-(acyl)-sphingosyl-1,3-cyclic phosphate + ethanolamine. It carries out the reaction a 1-acyl-sn-glycero-3-phosphocholine = a 1-acyl-sn-glycero-2,3-cyclic phosphate + choline. It catalyses the reaction a 1-acyl-sn-glycero-3-phosphoethanolamine = a 1-acyl-sn-glycero-2,3-cyclic phosphate + ethanolamine. Its function is as follows. Dermonecrotic toxins cleave the phosphodiester linkage between the phosphate and headgroup of certain phospholipids (sphingolipid and lysolipid substrates), forming an alcohol (often choline) and a cyclic phosphate. This toxin acts on sphingomyelin (SM). It may also act on ceramide phosphoethanolamine (CPE), lysophosphatidylcholine (LPC) and lysophosphatidylethanolamine (LPE), but not on lysophosphatidylserine (LPS), and lysophosphatidylglycerol (LPG). It acts by transphosphatidylation, releasing exclusively cyclic phosphate products as second products. Induces dermonecrosis, hemolysis, increased vascular permeability, edema, inflammatory response, and platelet aggregation. The sequence is that of Dermonecrotic toxin LsaSicTox-alphaIB2i from Loxosceles sabina (Tucson recluse spider).